A 262-amino-acid chain; its full sequence is Acyl-[acyl-carrier-protein]--UDP-N-acetylglucosamine O-acyltransferase (262 aa).

The protein belongs to the transferase hexapeptide repeat family. LpxA subfamily. In terms of assembly, homotrimer.

It localises to the cytoplasm. The catalysed reaction is a (3R)-hydroxyacyl-[ACP] + UDP-N-acetyl-alpha-D-glucosamine = a UDP-3-O-[(3R)-3-hydroxyacyl]-N-acetyl-alpha-D-glucosamine + holo-[ACP]. It functions in the pathway glycolipid biosynthesis; lipid IV(A) biosynthesis; lipid IV(A) from (3R)-3-hydroxytetradecanoyl-[acyl-carrier-protein] and UDP-N-acetyl-alpha-D-glucosamine: step 1/6. Its function is as follows. Involved in the biosynthesis of lipid A, a phosphorylated glycolipid that anchors the lipopolysaccharide to the outer membrane of the cell. This chain is Acyl-[acyl-carrier-protein]--UDP-N-acetylglucosamine O-acyltransferase, found in Erwinia tasmaniensis (strain DSM 17950 / CFBP 7177 / CIP 109463 / NCPPB 4357 / Et1/99).